The sequence spans 156 residues: ATP synthase subunit b (156 aa).

Residues 11-31 traverse the membrane as a helical segment; that stretch reads LIAFALFVWFCMKFVWPPIIN.

The protein belongs to the ATPase B chain family. As to quaternary structure, F-type ATPases have 2 components, F(1) - the catalytic core - and F(0) - the membrane proton channel. F(1) has five subunits: alpha(3), beta(3), gamma(1), delta(1), epsilon(1). F(0) has three main subunits: a(1), b(2) and c(10-14). The alpha and beta chains form an alternating ring which encloses part of the gamma chain. F(1) is attached to F(0) by a central stalk formed by the gamma and epsilon chains, while a peripheral stalk is formed by the delta and b chains.

The protein localises to the cell inner membrane. In terms of biological role, f(1)F(0) ATP synthase produces ATP from ADP in the presence of a proton or sodium gradient. F-type ATPases consist of two structural domains, F(1) containing the extramembraneous catalytic core and F(0) containing the membrane proton channel, linked together by a central stalk and a peripheral stalk. During catalysis, ATP synthesis in the catalytic domain of F(1) is coupled via a rotary mechanism of the central stalk subunits to proton translocation. Functionally, component of the F(0) channel, it forms part of the peripheral stalk, linking F(1) to F(0). The sequence is that of ATP synthase subunit b from Haemophilus influenzae (strain PittGG).